We begin with the raw amino-acid sequence, 428 residues long: Flotillin-2 (428 aa).

Residue glycine 2 is the site of N-myristoyl glycine attachment. The S-palmitoyl cysteine; by ZDHHC5 moiety is linked to residue cysteine 4. Residue cysteine 19 is the site of S-palmitoyl cysteine attachment. Cysteine 20 carries the S-palmitoyl cysteine; by ZDHHC5 lipid modification. Position 405 is a phosphoserine (serine 405).

The protein belongs to the band 7/mec-2 family. Flotillin subfamily. In terms of assembly, heterooligomeric complex of flotillin-1 and flotillin-2 and caveolin-1 and caveolin-2. Interacts with ECPAS. In terms of processing, ZDHHC5-catalyzed palmitoylation may be required for the formation of higher-order complexes and for neurite outgrowth in cultured neural stem cells. Expressed in many tissues, including suprabasal epidermis, hair follicles, heart, lung, thymus, spleen, liver, kidney and brain. Not expressed in skeletal muscle.

Its subcellular location is the cell membrane. The protein resides in the membrane. It localises to the caveola. It is found in the endosome. Functionally, may act as a scaffolding protein within caveolar membranes, functionally participating in formation of caveolae or caveolae-like vesicles. May be involved in epidermal cell adhesion and epidermal structure and function. The protein is Flotillin-2 (Flot2) of Mus musculus (Mouse).